A 431-amino-acid chain; its full sequence is E3 ubiquitin-protein ligase marc-3 (431 aa).

The RING-CH-type zinc-finger motif lies at 5–74 (NASLGPAVCR…EICKFAFKIK (70 aa)). 8 residues coordinate Zn(2+): Cys-13, Cys-16, Cys-38, Cys-40, His-48, Cys-51, Cys-64, and Cys-67. 2 helical membrane passes run 98–118 (PFID…GVFM) and 157–177 (LFLF…VSAL). Disordered stretches follow at residues 267–289 (TSPD…FGRR) and 327–349 (SRAT…RDMR). The span at 273 to 282 (NTHHHDESRN) shows a compositional bias: basic and acidic residues.

The protein localises to the cell membrane. It localises to the endosome membrane. It carries out the reaction S-ubiquitinyl-[E2 ubiquitin-conjugating enzyme]-L-cysteine + [acceptor protein]-L-lysine = [E2 ubiquitin-conjugating enzyme]-L-cysteine + N(6)-ubiquitinyl-[acceptor protein]-L-lysine.. Its pathway is protein modification; protein ubiquitination. E3 ubiquitin-protein ligase which positively regulates the fast polyspermy block during fertilization, preventing entry of more than one sperm into the oocyte. After fertilization, required in the zygote for the selective degradation of a subset of maternal membrane proteins including cav-1, chs-1 and rme-2, probably by mediating their K63-linked polyubiquitination. This chain is E3 ubiquitin-protein ligase marc-3, found in Caenorhabditis elegans.